The chain runs to 30 residues: V-type proton ATPase catalytic subunit A isoform 1 (30 aa).

Belongs to the ATPase alpha/beta chains family. In terms of assembly, V-ATPase is a heteromultimeric enzyme composed of a peripheral catalytic V1 complex (main components: subunits A, B, C, D, E, and F) attached to an integral membrane V0 proton pore complex (main component: the proteolipid protein).

It catalyses the reaction ATP + H2O + 4 H(+)(in) = ADP + phosphate + 5 H(+)(out). Functionally, catalytic subunit of the peripheral V1 complex of vacuolar ATPase. V-ATPase vacuolar ATPase is responsible for acidifying a variety of intracellular compartments in eukaryotic cells. This is V-type proton ATPase catalytic subunit A isoform 1 from Psilotum nudum (Whisk fern).